The sequence spans 1020 residues: Sodium/potassium-transporting ATPase subunit alpha-2 (1020 aa).

Positions 1–5 are excised as a propeptide; sequence MGRGA. The tract at residues 1-31 is disordered; sequence MGRGAGREYSPAATTAENGGGKKKQKEKELD. Residues 6-85 are Cytoplasmic-facing; sequence GREYSPAATT…NALTPPPTTP (80 aa). Position 10 is a phosphoserine (Ser-10). The interval 80 to 82 is interaction with phosphoinositide-3 kinase; that stretch reads PPP. Residues 86 to 106 traverse the membrane as a helical segment; it reads EWVKFCRQLFGGFSILLWIGA. The Extracellular segment spans residues 107 to 129; it reads ILCFLAYGIQAAMEDEPSNDNLY. The chain crosses the membrane as a helical span at residues 130–150; sequence LGVVLAAVVIVTGCFSYYQEA. Residues 151-286 are Cytoplasmic-facing; the sequence is KSSKIMDSFK…VGRTPIAMEI (136 aa). Over residues 212 to 227 the composition is skewed to polar residues; the sequence is DNSSLTGESEPQTRSP. Positions 212 to 231 are disordered; sequence DNSSLTGESEPQTRSPEFTH. The chain crosses the membrane as a helical span at residues 287–306; the sequence is EHFIQLITGVAVFLGVSFFV. The Extracellular segment spans residues 307 to 318; that stretch reads LSLILGYSWLEA. The chain crosses the membrane as a helical span at residues 319–336; sequence VIFLIGIIVANVPEGLLA. Topologically, residues 337–769 are cytoplasmic; it reads TVTVCLTLTA…EEGRLIFDNL (433 aa). The 4-aspartylphosphate intermediate role is filled by Asp-374. Residues Ser-439, Ser-450, and Ser-559 each carry the phosphoserine modification. The residue at position 570 (Thr-570) is a Phosphothreonine. Residues Ser-587 and Ser-672 each carry the phosphoserine modification. Asp-714 and Asp-718 together coordinate Mg(2+). Residues 770-789 traverse the membrane as a helical segment; it reads KKSIAYTLTSNIPEITPFLL. The Extracellular portion of the chain corresponds to 790–799; that stretch reads FIIANIPLPL. Residues 800-820 form a helical membrane-spanning segment; it reads GTVTILCIDLGTDMVPAISLA. The Cytoplasmic portion of the chain corresponds to 821–840; sequence YEAAESDIMKRQPRNPQTDK. Ser-826 carries the phosphoserine modification. The helical transmembrane segment at 841–863 threads the bilayer; sequence LVNERLISMAYGQIGMIQALGGF. Residues 864–915 are Extracellular-facing; the sequence is FTYFVILAENGFLPSRLLGIRLDWDDRSMNDLEDSYGQEWTYEQRKVVEFTC. Residues 916 to 935 traverse the membrane as a helical segment; sequence HTAFFASIVVVQWADLIICK. At 936–948 the chain is on the cytoplasmic side; the sequence is TRRNSVFQQGMKN. Ser-940 bears the Phosphoserine; by PKA mark. A helical transmembrane segment spans residues 949–967; that stretch reads KILIFGLLEETALAAFLSY. The Extracellular portion of the chain corresponds to 968–982; it reads CPGMGVALRMYPLKV. A helical membrane pass occupies residues 983-1003; that stretch reads TWWFCAFPYSLLIFIYDEVRK. The Cytoplasmic segment spans residues 1004–1020; that stretch reads LILRRYPGGWVEKETYY.

This sequence belongs to the cation transport ATPase (P-type) (TC 3.A.3) family. Type IIC subfamily. In terms of assembly, the sodium/potassium-transporting ATPase is composed of a catalytic alpha subunit, an auxiliary non-catalytic beta subunit and an additional regulatory subunit. Interacts with regulatory subunit FXYD1.

The protein resides in the membrane. The protein localises to the cell membrane. It catalyses the reaction K(+)(out) + Na(+)(in) + ATP + H2O = K(+)(in) + Na(+)(out) + ADP + phosphate + H(+). This is the catalytic component of the active enzyme, which catalyzes the hydrolysis of ATP coupled with the exchange of sodium and potassium ions across the plasma membrane. This action creates the electrochemical gradient of sodium and potassium, providing the energy for active transport of various nutrients. In Sus scrofa (Pig), this protein is Sodium/potassium-transporting ATPase subunit alpha-2 (ATP1A2).